Reading from the N-terminus, the 595-residue chain is MSPFSETSVLLLPMVEKCINLLQTYGVSSITKLRQIHAFSIRHGVSISDAELGKHLIFYLVSLPSPPPMSYAHKVFSKIEKPINVFIWNTLIRGYAEIGNSISAFSLYREMRVSGLVEPDTHTYPFLIKAVTTMADVRLGETIHSVVIRSGFGSLIYVQNSLLHLYANCGDVASAYKVFDKMPEKDLVAWNSVINGFAENGKPEEALALYTEMNSKGIKPDGFTIVSLLSACAKIGALTLGKRVHVYMIKVGLTRNLHSSNVLLDLYARCGRVEEAKTLFDEMVDKNSVSWTSLIVGLAVNGFGKEAIELFKYMESTEGLLPCEITFVGILYACSHCGMVKEGFEYFRRMREEYKIEPRIEHFGCMVDLLARAGQVKKAYEYIKSMPMQPNVVIWRTLLGACTVHGDSDLAEFARIQILQLEPNHSGDYVLLSNMYASEQRWSDVQKIRKQMLRDGVKKVPGHSLVEVGNRVHEFLMGDKSHPQSDAIYAKLKEMTGRLRSEGYVPQISNVYVDVEEEEKENAVVYHSEKIAIAFMLISTPERSPITVVKNLRVCADCHLAIKLVSKVYNREIVVRDRSRFHHFKNGSCSCQDYW.

PPR repeat units lie at residues 84–118 (NVFI…GLVE), 120–154 (DTHT…GFGS), 155–185 (LIYV…MPEK), 186–220 (DLVA…GIKP), 221–255 (DGFT…GLTR), 256–290 (NLHS…NSVS), 291–317 (WTSL…MEST), 323–353 (CEIT…MREE), and 359–389 (RIEH…MPMQ). A type E motif region spans residues 394–469 (IWRTLLGACT…VPGHSLVEVG (76 aa)). Residues 470–500 (NRVHEFLMGDKSHPQSDAIYAKLKEMTGRLR) form a type E(+) motif region. The tract at residues 501 to 595 (SEGYVPQISN…NGSCSCQDYW (95 aa)) is type DYW motif.

The protein belongs to the PPR family. PCMP-H subfamily.

In Arabidopsis thaliana (Mouse-ear cress), this protein is Pentatricopeptide repeat-containing protein At4g21065 (PCMP-H28).